A 212-amino-acid polypeptide reads, in one-letter code: MTPQSQPQETAVALIPYVIEQTSKGERSYDIYSRLLKDRIIILGTAVTDEVANSIIAQMLFLEVDNPEKPIHLYINSPGGSVSAGLAIYDFMQFVKCDVATYCMGMAASMGSLLLTAGTKGMRYSLPNTRIMIHQPLLSGGGLSGQVTDIEIHAKELVKTKEKLTRIYETHTGRDYDTLRAAMERDNFMDPYQAKEFGLLDHVVESRKAKKG.

The Nucleophile role is filled by Ser-109. His-134 is a catalytic residue.

The protein belongs to the peptidase S14 family. In terms of assembly, fourteen ClpP subunits assemble into 2 heptameric rings which stack back to back to give a disk-like structure with a central cavity, resembling the structure of eukaryotic proteasomes.

It localises to the cytoplasm. The catalysed reaction is Hydrolysis of proteins to small peptides in the presence of ATP and magnesium. alpha-casein is the usual test substrate. In the absence of ATP, only oligopeptides shorter than five residues are hydrolyzed (such as succinyl-Leu-Tyr-|-NHMec, and Leu-Tyr-Leu-|-Tyr-Trp, in which cleavage of the -Tyr-|-Leu- and -Tyr-|-Trp bonds also occurs).. In terms of biological role, cleaves peptides in various proteins in a process that requires ATP hydrolysis. Has a chymotrypsin-like activity. Plays a major role in the degradation of misfolded proteins. This chain is ATP-dependent Clp protease proteolytic subunit, found in Bdellovibrio bacteriovorus (strain ATCC 15356 / DSM 50701 / NCIMB 9529 / HD100).